A 443-amino-acid polypeptide reads, in one-letter code: ATP-dependent protease ATPase subunit HslU (443 aa).

Residues Ile-18, 60 to 65 (GVGKTE), Asp-256, Glu-321, and Arg-393 each bind ATP.

Belongs to the ClpX chaperone family. HslU subfamily. In terms of assembly, a double ring-shaped homohexamer of HslV is capped on each side by a ring-shaped HslU homohexamer. The assembly of the HslU/HslV complex is dependent on binding of ATP.

It localises to the cytoplasm. Functionally, ATPase subunit of a proteasome-like degradation complex; this subunit has chaperone activity. The binding of ATP and its subsequent hydrolysis by HslU are essential for unfolding of protein substrates subsequently hydrolyzed by HslV. HslU recognizes the N-terminal part of its protein substrates and unfolds these before they are guided to HslV for hydrolysis. The protein is ATP-dependent protease ATPase subunit HslU of Escherichia coli O157:H7 (strain EC4115 / EHEC).